The following is a 179-amino-acid chain: Inner membrane-spanning protein YciB (179 aa).

6 helical membrane passes run 3 to 23 (FLFDLFPVILFFAAFKLADIY), 24 to 44 (TATAVAIGATVLQIGWVWFRH), 49 to 69 (PMQWVSLLIIAVFGGATLVLH), 76 to 96 (WKPTVLYWMFAVGLLGSVIGW), 121 to 141 (AAWAGFFAAMGVLNLYVAYQF), and 149 to 169 (FKLFGSMGLMLVFIVAQSVWL).

It belongs to the YciB family.

The protein localises to the cell inner membrane. Functionally, plays a role in cell envelope biogenesis, maintenance of cell envelope integrity and membrane homeostasis. This is Inner membrane-spanning protein YciB from Cupriavidus necator (strain ATCC 17699 / DSM 428 / KCTC 22496 / NCIMB 10442 / H16 / Stanier 337) (Ralstonia eutropha).